Reading from the N-terminus, the 497-residue chain is MTETLVAFDDVLASYDPAMGLEVHVELNTASKMFCGCPTEFGAEPNTQVCPTCLGLPGAMPVVNGKAVESAIRIGLALNCEIAEWCRFARKNYFYPDMPKNFQTSQYDEPICFEGYMDVDVDGETFRVEIERAHMEEDTGKSLHVGGATGRIHGADHSLVDYNRAGIPLIEIVTKPIVGAGAKAPEVARAYVAQLRDLIIALGVSDARMDQGSIRADVNLSLSPKDSGTLGTRTETKNVNSLRSVERAVRYEMSRHAGVLDAGRPILQETRHWHEDTGVTTSGREKSDAEDYRYFPEPDLVPVAPTRAWVEELRGTLPENPTQKRARLQAEWGFSDLEMRDTVGAGALLIVEETIAAGASPQAARKWWLGEMARRANEAGVEVGELGVTPVDVARVQVLVDEGKLNDKLARQVFDGLLAGEGSPDEIVAARGLAIVSDEGALSAAVDSAIAANPDVADKIRDGKVAAAGALIGAVMKEMRGQADAARVRELILEKLA.

This sequence belongs to the GatB/GatE family. GatB subfamily. In terms of assembly, heterotrimer of A, B and C subunits.

The catalysed reaction is L-glutamyl-tRNA(Gln) + L-glutamine + ATP + H2O = L-glutaminyl-tRNA(Gln) + L-glutamate + ADP + phosphate + H(+). The enzyme catalyses L-aspartyl-tRNA(Asn) + L-glutamine + ATP + H2O = L-asparaginyl-tRNA(Asn) + L-glutamate + ADP + phosphate + 2 H(+). Allows the formation of correctly charged Asn-tRNA(Asn) or Gln-tRNA(Gln) through the transamidation of misacylated Asp-tRNA(Asn) or Glu-tRNA(Gln) in organisms which lack either or both of asparaginyl-tRNA or glutaminyl-tRNA synthetases. The reaction takes place in the presence of glutamine and ATP through an activated phospho-Asp-tRNA(Asn) or phospho-Glu-tRNA(Gln). In Nocardioides sp. (strain ATCC BAA-499 / JS614), this protein is Aspartyl/glutamyl-tRNA(Asn/Gln) amidotransferase subunit B.